The sequence spans 68 residues: Large ribosomal subunit protein uL29 (68 aa).

It belongs to the universal ribosomal protein uL29 family.

This Pyrococcus horikoshii (strain ATCC 700860 / DSM 12428 / JCM 9974 / NBRC 100139 / OT-3) protein is Large ribosomal subunit protein uL29 (rpl29).